The sequence spans 543 residues: Formate--tetrahydrofolate ligase (543 aa).

An ATP-binding site is contributed by 54–61; that stretch reads TPAGEGKT.

Belongs to the formate--tetrahydrofolate ligase family.

The enzyme catalyses (6S)-5,6,7,8-tetrahydrofolate + formate + ATP = (6R)-10-formyltetrahydrofolate + ADP + phosphate. Its pathway is one-carbon metabolism; tetrahydrofolate interconversion. The sequence is that of Formate--tetrahydrofolate ligase from Thermus thermophilus (strain ATCC BAA-163 / DSM 7039 / HB27).